Reading from the N-terminus, the 191-residue chain is Probable GTP-binding protein EngB (191 aa).

In terms of domain architecture, EngB-type G spans 22-191 (DFDHFLILGR…KLINEEFSNE (170 aa)). GTP-binding positions include 30–37 (GRSNVGKS), 57–61 (GKTIT), 75–78 (DAPG), 142–145 (TKYD), and 172–174 (TSS). Serine 37 and threonine 59 together coordinate Mg(2+).

The protein belongs to the TRAFAC class TrmE-Era-EngA-EngB-Septin-like GTPase superfamily. EngB GTPase family. Mg(2+) serves as cofactor.

Its function is as follows. Necessary for normal cell division and for the maintenance of normal septation. This chain is Probable GTP-binding protein EngB, found in Acholeplasma laidlawii (strain PG-8A).